A 487-amino-acid chain; its full sequence is Nitrate reductase beta chain (487 aa).

4Fe-4S ferredoxin-type domains follow at residues 7–36 (IGMV…RSGA), 172–203 (VFMM…KREE), and 205–234 (GIVL…FNWQ). [4Fe-4S] cluster is bound by residues Cys-16, Cys-19, Cys-22, Cys-26, Cys-181, Cys-184, and Cys-189. [3Fe-4S] cluster is bound by residues Cys-193, Cys-214, and Cys-220. [4Fe-4S] cluster-binding residues include Cys-224, Cys-241, Cys-244, Cys-256, and Cys-260.

[4Fe-4S] cluster serves as cofactor. [3Fe-4S] cluster is required as a cofactor.

Its subcellular location is the cell membrane. The catalysed reaction is nitrate + a quinol = a quinone + nitrite + H2O. Functionally, the beta chain is an electron transfer unit containing four cysteine clusters involved in the formation of iron-sulfur centers. Electrons are transferred from the gamma chain to the molybdenum cofactor of the alpha subunit. This is Nitrate reductase beta chain (narH) from Bacillus subtilis (strain 168).